A 200-amino-acid chain; its full sequence is Rho GDP-dissociation inhibitor 2 (200 aa).

Residues 1-40 (MTEKAPEPHVEEDDDELDGKLNYKPPPQKSLKELQEMDKD) are disordered. Threonine 2 is modified (N-acetylthreonine). Residue lysine 20 is modified to N6-acetyllysine. Tyrosine 23 is subject to Phosphotyrosine. N6-acetyllysine is present on residues lysine 24, lysine 39, lysine 46, lysine 101, and lysine 123. Residues 30–40 (SLKELQEMDKD) show a composition bias toward basic and acidic residues. Serine 144 carries the post-translational modification Phosphoserine. An N6-acetyllysine modification is found at lysine 174.

This sequence belongs to the Rho GDI family. Interacts with RHOA. Interacts with RAC1. Interacts with RAC2. Interacts with CDC42.

It localises to the cytoplasm. Its subcellular location is the cytosol. Regulates the GDP/GTP exchange reaction of the Rho proteins by inhibiting the dissociation of GDP from them, and the subsequent binding of GTP to them. Regulates reorganization of the actin cytoskeleton mediated by Rho family members. This Bos taurus (Bovine) protein is Rho GDP-dissociation inhibitor 2 (ARHGDIB).